Consider the following 486-residue polypeptide: E3 ubiquitin-protein ligase RNF8 (486 aa).

An FHA domain is found at V38–L92. The required for interaction with PIWIL1 stretch occupies residues Q68–G72. S157 is modified (phosphoserine). Polar residues predominate over residues S180–E201. The tract at residues S180–L207 is disordered. An RING-type zinc finger spans residues C404 to R442.

This sequence belongs to the RNF8 family. In terms of assembly, homodimer. Forms a E2-E3 ubiquitin ligase complex composed of the RNF8 homodimer and a E2 heterodimer of UBE2N and UBE2V2. Interacts with class III E2s, including UBE2E1, UBE2E2, and UBE2E3 and with UBE2N. Interacts with RXRA. Interacts (via FHA domain) with phosphorylated HERC2 (via C-terminus). Interacts with PIWIL1; leading to sequester RNF8 in the cytoplasm. Interacts with WRAP53/TCAB1. Autoubiquitinated through 'Lys-48' and 'Lys-63' of ubiquitin. 'Lys-63' polyubiquitination is mediated by UBE2N. 'Lys-29'-type polyubiquitination is also observed, but it doesn't require its own functional RING-type zinc finger.

The protein resides in the nucleus. It localises to the cytoplasm. The protein localises to the midbody. Its subcellular location is the chromosome. It is found in the telomere. The enzyme catalyses S-ubiquitinyl-[E2 ubiquitin-conjugating enzyme]-L-cysteine + [acceptor protein]-L-lysine = [E2 ubiquitin-conjugating enzyme]-L-cysteine + N(6)-ubiquitinyl-[acceptor protein]-L-lysine.. Its pathway is protein modification; protein ubiquitination. Its function is as follows. E3 ubiquitin-protein ligase that plays a key role in DNA damage signaling via 2 distinct roles: by mediating the 'Lys-63'-linked ubiquitination of histones H2A and H2AX and promoting the recruitment of DNA repair proteins at double-strand breaks (DSBs) sites, and by catalyzing 'Lys-48'-linked ubiquitination to remove target proteins from DNA damage sites. Following DNA DSBs, it is recruited to the sites of damage by ATM-phosphorylated MDC1 and catalyzes the 'Lys-63'-linked ubiquitination of histones H2A and H2AX, thereby promoting the formation of TP53BP1 and BRCA1 ionizing radiation-induced foci (IRIF). Also controls the recruitment of UIMC1-BRCC3 (RAP80-BRCC36) and PAXIP1/PTIP to DNA damage sites. Promotes the recruitment of NBN to DNA damage sites by catalyzing 'Lys-6'-linked ubiquitination of NBN. Also recruited at DNA interstrand cross-links (ICLs) sites and catalyzes 'Lys-63'-linked ubiquitination of histones H2A and H2AX, leading to recruitment of FAAP20 and Fanconi anemia (FA) complex, followed by interstrand cross-link repair. H2A ubiquitination also mediates the ATM-dependent transcriptional silencing at regions flanking DSBs in cis, a mechanism to avoid collision between transcription and repair intermediates. Promotes the formation of 'Lys-63'-linked polyubiquitin chains via interactions with the specific ubiquitin-conjugating UBE2N/UBC13 and ubiquitinates non-histone substrates such as PCNA. Substrates that are polyubiquitinated at 'Lys-63' are usually not targeted for degradation. Also catalyzes the formation of 'Lys-48'-linked polyubiquitin chains via interaction with the ubiquitin-conjugating UBE2L6/UBCH8, leading to degradation of substrate proteins such as CHEK2, JMJD2A/KDM4A and KU80/XRCC5: it is still unclear how the preference toward 'Lys-48'- versus 'Lys-63'-linked ubiquitination is regulated but it could be due to RNF8 ability to interact with specific E2 specific ligases. For instance, interaction with phosphorylated HERC2 promotes the association between RNF8 and UBE2N/UBC13 and favors the specific formation of 'Lys-63'-linked ubiquitin chains. Promotes non-homologous end joining (NHEJ) by promoting the 'Lys-48'-linked ubiquitination and degradation the of KU80/XRCC5. Following DNA damage, mediates the ubiquitination and degradation of JMJD2A/KDM4A in collaboration with RNF168, leading to unmask H4K20me2 mark and promote the recruitment of TP53BP1 at DNA damage sites. Following DNA damage, mediates the ubiquitination and degradation of POLD4/p12, a subunit of DNA polymerase delta. In the absence of POLD4, DNA polymerase delta complex exhibits higher proofreading activity. In addition to its function in damage signaling, also plays a role in higher-order chromatin structure by mediating extensive chromatin decondensation. Involved in the activation of ATM by promoting histone H2B ubiquitination, which indirectly triggers histone H4 'Lys-16' acetylation (H4K16ac), establishing a chromatin environment that promotes efficient activation of ATM kinase. Required in the testis, where it plays a role in the replacement of histones during spermatogenesis. At uncapped telomeres, promotes the joining of deprotected chromosome ends by inducing H2A ubiquitination and TP53BP1 recruitment, suggesting that it may enhance cancer development by aggravating telomere-induced genome instability in case of telomeric crisis. Promotes the assembly of RAD51 at DNA DSBs in the absence of BRCA1 and TP53BP1 Also involved in class switch recombination in immune system, via its role in regulation of DSBs repair. May be required for proper exit from mitosis after spindle checkpoint activation and may regulate cytokinesis. May play a role in the regulation of RXRA-mediated transcriptional activity. Not involved in RXRA ubiquitination by UBE2E2. In Pongo abelii (Sumatran orangutan), this protein is E3 ubiquitin-protein ligase RNF8.